Consider the following 915-residue polypeptide: Probable inorganic carbon transporter subunit DabA (915 aa).

Zn(2+) is bound by residues cysteine 392, aspartate 394, histidine 566, and cysteine 581.

The protein belongs to the inorganic carbon transporter (TC 9.A.2) DabA family. Forms a complex with DabB. The cofactor is Zn(2+).

It is found in the cell inner membrane. In terms of biological role, part of an energy-coupled inorganic carbon pump. In Nitrosospira multiformis (strain ATCC 25196 / NCIMB 11849 / C 71), this protein is Probable inorganic carbon transporter subunit DabA.